The following is a 338-amino-acid chain: Nicotinate-nucleotide--dimethylbenzimidazole phosphoribosyltransferase (338 aa).

The active-site Proton acceptor is the Glu305.

Belongs to the CobT family.

The enzyme catalyses 5,6-dimethylbenzimidazole + nicotinate beta-D-ribonucleotide = alpha-ribazole 5'-phosphate + nicotinate + H(+). Its pathway is nucleoside biosynthesis; alpha-ribazole biosynthesis; alpha-ribazole from 5,6-dimethylbenzimidazole: step 1/2. In terms of biological role, catalyzes the synthesis of alpha-ribazole-5'-phosphate from nicotinate mononucleotide (NAMN) and 5,6-dimethylbenzimidazole (DMB). The sequence is that of Nicotinate-nucleotide--dimethylbenzimidazole phosphoribosyltransferase from Sinorhizobium fredii (strain NBRC 101917 / NGR234).